A 151-amino-acid chain; its full sequence is 3-dehydroquinate dehydratase 1 (151 aa).

Tyrosine 24 (proton acceptor) is an active-site residue. Substrate-binding residues include asparagine 75, histidine 81, and aspartate 88. Histidine 101 (proton donor) is an active-site residue. Residues 102–103 (IS) and arginine 112 contribute to the substrate site.

The protein belongs to the type-II 3-dehydroquinase family. Homododecamer.

It catalyses the reaction 3-dehydroquinate = 3-dehydroshikimate + H2O. The protein operates within metabolic intermediate biosynthesis; chorismate biosynthesis; chorismate from D-erythrose 4-phosphate and phosphoenolpyruvate: step 3/7. Catalyzes a trans-dehydration via an enolate intermediate. In Corynebacterium efficiens (strain DSM 44549 / YS-314 / AJ 12310 / JCM 11189 / NBRC 100395), this protein is 3-dehydroquinate dehydratase 1 (aroQ1).